Consider the following 395-residue polypeptide: Gastric triacylglycerol lipase (395 aa).

The signal sequence occupies residues 1–18; sequence MWLLLVTSVLSAFGGAHG. Asn33 carries N-linked (GlcNAc...) asparagine glycosylation. In terms of domain architecture, AB hydrolase-1 spans 81 to 376; it reads LQHGLIASAT…LPYNHLDFIW (296 aa). The active-site Nucleophile is Ser171. A disulfide bridge connects residues Cys245 and Cys254. A glycan (N-linked (GlcNAc...) asparagine) is linked at Asn270. Catalysis depends on charge relay system residues Asp342 and His371.

This sequence belongs to the AB hydrolase superfamily. Lipase family.

It localises to the secreted. The enzyme catalyses a triacylglycerol + H2O = a diacylglycerol + a fatty acid + H(+). The catalysed reaction is 1,2,3-tri-(9Z-octadecenoyl)-glycerol + H2O = 1,2-di-(9Z-octadecenoyl)-sn-glycerol + (9Z)-octadecenoate + H(+). It carries out the reaction 1,2,3-trioctanoylglycerol + H2O = 1,2-dioctanoyl-sn-glycerol + octanoate + H(+). Catalyzes the hydrolysis of triacylglycerols to yield free fatty acids, diacylglycerol, monoacylglycerol, and glycerol. Shows a preferential hydrolysis at the sn-3 position of triacylglycerol. The sequence is that of Gastric triacylglycerol lipase (Lipf) from Mus musculus (Mouse).